The chain runs to 307 residues: Coproporphyrin III ferrochelatase (307 aa).

Fe-coproporphyrin III is bound by residues Tyr-12, Arg-29, 45–46, Ser-53, and Tyr-124; that span reads RY. His-181 and Glu-263 together coordinate Fe(2+).

It belongs to the ferrochelatase family.

It localises to the cytoplasm. It catalyses the reaction Fe-coproporphyrin III + 2 H(+) = coproporphyrin III + Fe(2+). It participates in porphyrin-containing compound metabolism; protoheme biosynthesis. In terms of biological role, involved in coproporphyrin-dependent heme b biosynthesis. Catalyzes the insertion of ferrous iron into coproporphyrin III to form Fe-coproporphyrin III. The polypeptide is Coproporphyrin III ferrochelatase (Staphylococcus epidermidis (strain ATCC 12228 / FDA PCI 1200)).